Consider the following 227-residue polypeptide: ATP-dependent dethiobiotin synthetase BioD (227 aa).

13–18 (DVGKTV) lines the ATP pocket. T17 provides a ligand contact to Mg(2+). K38 is an active-site residue. ATP is bound by residues D55, 116–119 (EGAG), 176–177 (NR), and 205–207 (PYI). Positions 55 and 116 each coordinate Mg(2+).

This sequence belongs to the dethiobiotin synthetase family. As to quaternary structure, homodimer. Mg(2+) is required as a cofactor.

The protein resides in the cytoplasm. It carries out the reaction (7R,8S)-7,8-diammoniononanoate + CO2 + ATP = (4R,5S)-dethiobiotin + ADP + phosphate + 3 H(+). Its pathway is cofactor biosynthesis; biotin biosynthesis; biotin from 7,8-diaminononanoate: step 1/2. Catalyzes a mechanistically unusual reaction, the ATP-dependent insertion of CO2 between the N7 and N8 nitrogen atoms of 7,8-diaminopelargonic acid (DAPA, also called 7,8-diammoniononanoate) to form a ureido ring. This Vibrio campbellii (strain ATCC BAA-1116) protein is ATP-dependent dethiobiotin synthetase BioD.